The primary structure comprises 1037 residues: MDHTECNNRIEYLQNKVLELESLNENLKGQLEYFQTKFLESNLNSEGKDISSCLTEIYNSLSLDNNNNNSNSNSNSNNNSSNSNNNSYSNFNSNNNTTNNTKVIKNRNFKINLTNSNSTNSSPYIFGNNKDNSNNSNNSNNNNSNTELSNDHLSLEDNIATTNTTTTTTINTSNSNNSNNNNNNNNNNNNNNNNNNNNNNKPTSNRPPVAPRSFIRSNSDTFITPPGSPTSSRNSPTNKSSPQFLSPLSKSPLSQSTQSTTVSSPSPSWTTTVPQSKMRSETIVQSKSPYSPDTNISNKLINELASNIGAPNSNGSESPSKNSPRSLNSNNNNSSATTSITTPPTTSTPTPTTSTTTTTTTERRPEDRRSKTSPFPNVGTTTPPLSNSAHLVRTQSASGANAVKPQSQLSTSCTVNMIGGGGTPRSNNSSNGSLYHSMSSNGLIENLSTSSSLSLSSTSPSPNNSQQNLTNPFEIGADDELEVLDDPRLVMVKTENGFIVKGGTIEKLVNRLIAKHDPDFTSAFLLTHKSFTTSIELLDLLIEFYVNNKDSSSINSNSSSSSSSAVASSSFSNINCNISDLSSSTSSTNSLLINSITNSPIINSNNQNNQNNNNNNNNNNNNNNNQLEINGDKKKKAIRLKITNVIKSWVDKHYYDFSEDKQLTLKLDQFITNHIMFDMDKIGFNLKRLLTNDRVVPVPTFTQGPPTPIPPKMKSNGSEINFKDLDPTEIARQLTLYESDLFRKIGAKECLGQAWNKDGKEENAPNIVSFIKRFNQVSSWVATEIVRQEKLKDRVSYIKRFILVAQECRKLNNFNATMEILSGLQNSSVYRLRKTWERVESKPLLKNTLDELMSLMSSGANYKNYIQELHNIHPPCIPYLGVYLTHLTFIEDGMKNVLTTTTATTTNTTTTTTTTTTTTTTNTTTSNNNNQQQLNGANRSFDDVIINFEKCRKISVVIREIKQYQQQQYHLHTEEFTLRYLSNLPSIQTQKSMYKLSLICEPKEKETSSFDSGYGSVSDRPSKKEFSVTSLLNSFKS.

Positions Glu-5 to Gln-35 form a coiled coil. 8 disordered regions span residues Asn-65–Asn-100, Thr-114–Asn-150, Thr-166–Asn-387, Thr-414–Ser-437, Ser-451–Pro-472, Ile-602–Glu-628, Asn-907–Asn-935, and Glu-1004–Ser-1037. Composition is skewed to low complexity over residues Thr-114 to Asn-145 and Thr-166 to Asn-200. A compositionally biased stretch (polar residues) spans Pro-229–Lys-239. Low complexity predominate over residues Ser-240 to Ser-276. The segment covering Thr-282 to Leu-300 has biased composition (polar residues). Over residues Ser-318 to Thr-360 the composition is skewed to low complexity. A compositionally biased stretch (basic and acidic residues) spans Thr-361 to Ser-370. 2 stretches are compositionally biased toward polar residues: residues Thr-372–Asn-387 and Pro-424–Ser-437. The N-terminal Ras-GEF domain occupies Asn-496–Arg-694. The 278-residue stretch at Asp-726–Lys-1003 folds into the Ras-GEF domain. Residues Asn-907 to Asn-930 show a composition bias toward low complexity. The span at Ser-1027–Ser-1037 shows a compositional bias: polar residues.

Its function is as follows. Promotes the exchange of Ras-bound GDP by GTP. Seems to play a role in chemotaxis. This is Ras guanine nucleotide exchange factor E (gefE) from Dictyostelium discoideum (Social amoeba).